A 494-amino-acid chain; its full sequence is Glutamate decarboxylase 2 (494 aa).

Lys-276 bears the N6-(pyridoxal phosphate)lysine mark. The interval Val-463–Cys-494 is calmodulin-binding.

This sequence belongs to the group II decarboxylase family. As to quaternary structure, homohexamer. Interacts with calmodulin. The cofactor is pyridoxal 5'-phosphate. In terms of tissue distribution, expressed in roots, inflorescence stems, flowers, siliques and leaves.

The catalysed reaction is L-glutamate + H(+) = 4-aminobutanoate + CO2. With respect to regulation, up-regulated by calmodulin binding at physiological pH. In terms of biological role, catalyzes the conversion of glutamate to 4-aminobutanoate (GABA). The calmodulin-binding is calcium-dependent and it is proposed to directly or indirectly form a calcium regulated control of GABA biosynthesis. This Arabidopsis thaliana (Mouse-ear cress) protein is Glutamate decarboxylase 2 (GAD2).